The primary structure comprises 123 residues: cAMP-responsive element-binding protein-like 2 (123 aa).

The tract at residues 1–24 (MDDSKVVGGKVKKPGKRGRKPAKI) is disordered. Residues 10–21 (KVKKPGKRGRKP) show a composition bias toward basic residues. Residues 23–86 (KIDLKAKLER…MAMDQGKIPS (64 aa)) enclose the bZIP domain. Residues 29–60 (KLERSRQSARECRARKKLRYQYLEELVSSRER) are basic motif. Residues 62 to 69 (ICALREEL) are leucine-zipper. The tract at residues 92-123 (LTGEEQSKPQQNSSRHPKAGKTDANTNSLVGN) is disordered. Polar residues predominate over residues 114–123 (DANTNSLVGN).

The protein belongs to the bZIP family. ATF subfamily. In terms of assembly, interacts with CREB1; regulates CREB1 phosphorylation, stability and transcriptional activity. In terms of processing, phosphorylated by AMPK. As to expression, widely expressed with higher expression in adipose tissue, skeletal muscle, and liver (at protein level).

Its subcellular location is the nucleus. In terms of biological role, probable regulator of CREB1 transcriptional activity which is involved in adipose cells differentiation. May also play a regulatory role in the cell cycle. The chain is cAMP-responsive element-binding protein-like 2 (Crebl2) from Mus musculus (Mouse).